We begin with the raw amino-acid sequence, 197 residues long: Thymidine kinase (197 aa).

ATP-binding positions include 9–16 (SAMDAGKT) and 87–90 (DEIH). Glu-88 (proton acceptor) is an active-site residue. Residues Cys-145, Cys-147, Cys-187, and His-190 each coordinate Zn(2+).

Belongs to the thymidine kinase family. Homotetramer.

The protein localises to the cytoplasm. It catalyses the reaction thymidine + ATP = dTMP + ADP + H(+). This Francisella tularensis subsp. tularensis (strain SCHU S4 / Schu 4) protein is Thymidine kinase.